Here is a 504-residue protein sequence, read N- to C-terminus: Peroxisome proliferator-activated receptor gamma (504 aa).

Phosphoserine; by MAPK is present on S111. The segment at residues 135–209 (AIECRVCGDK…VGMSHNAIRF (75 aa)) is a DNA-binding region (nuclear receptor). 2 consecutive NR C4-type zinc fingers follow at residues 138-158 (CRVC…CEGC) and 175-197 (CDLN…FQKC). The interaction with FAM120B stretch occupies residues 204-279 (HNAIRFGRMP…DKSPFVIYDM (76 aa)). Residues 237–502 (DLRALAKHLY…HPLLQEIYKD (266 aa)) form the NR LBD domain. K251 participates in a covalent cross-link: Glycyl lysine isopeptide (Lys-Gly) (interchain with G-Cter in ubiquitin). Residues 494-502 (PLLQEIYKD) carry the 9aaTAD motif.

The protein belongs to the nuclear hormone receptor family. NR1 subfamily. In terms of assembly, interacts with FOXO1 (acetylated form). Heterodimer with other nuclear receptors, such as RXRA. The heterodimer with the retinoic acid receptor RXRA is called adipocyte-specific transcription factor ARF6. Interacts with NCOA6 coactivator, leading to a strong increase in transcription of target genes. Interacts with coactivator PPARBP, leading to a mild increase in transcription of target genes. Interacts with NOCA7 in a ligand-inducible manner. Interacts with NCOA1 and NCOA2 LXXLL motifs. Interacts with ASXL1, ASXL2, DNTTIP2, FAM120B, MAP2K1/MEK1, NR0B2, PDPK1, PRDM16, PRMT2 and TGFB1I1. Interacts (when activated by agonist) with PPP5C. Interacts with HELZ2 and THRAP3; the interaction stimulates the transcriptional activity of PPARG. Interacts with PER2, the interaction is ligand dependent and blocks PPARG recruitment to target promoters. Interacts with NOCT. Interacts with ACTN4. Interacts (when in the liganded conformation) with GPS2. Interacts with CRY1 and CRY2 in a ligand-dependent manner. In the absence of hormonal ligand, interacts with TACC1. In macrophages, interacts with PAQR3 and STUB1; the interactions promote PPARG poylubiquitination and STUB1-mediated degradation. Post-translationally, phosphorylated at basal conditions and dephosphorylated when treated with the ligand. May be dephosphorylated by PPP5C. The phosphorylated form may be inactive and dephosphorylation induces adipogenic activity. Ubiquitinated by E3 ubiquitin-protein ligase complex containing FBXO9; leading to proteasomal degradation. Ubiquitinated at Lys-251 by TRIM55 leading to proteasomal degradation. Ubiquitinated by E3 ubiquitin-protein ligase STUB1/CHIP; leading to proteasomal degradation. In terms of tissue distribution, highest expression in adipose tissue and lower in spleen. Very low levels in kidney, intestine, lung and muscle.

Its subcellular location is the nucleus. The protein localises to the cytoplasm. With respect to regulation, PDPK1 activates its transcriptional activity independently of its kinase activity. In terms of biological role, nuclear receptor that binds peroxisome proliferators such as hypolipidemic drugs and fatty acids. Once activated by a ligand, the nuclear receptor binds to DNA specific PPAR response elements (PPRE) and modulates the transcription of its target genes, such as acyl-CoA oxidase. It therefore controls the peroxisomal beta-oxidation pathway of fatty acids. Key regulator of adipocyte differentiation and glucose homeostasis. ARF6 acts as a key regulator of the tissue-specific adipocyte P2 (aP2) enhancer. Acts as a critical regulator of gut homeostasis by suppressing NF-kappa-B-mediated pro-inflammatory responses. Plays a role in the regulation of cardiovascular circadian rhythms by regulating the transcription of BMAL1 in the blood vessels. This chain is Peroxisome proliferator-activated receptor gamma (PPARG), found in Sus scrofa (Pig).